A 324-amino-acid polypeptide reads, in one-letter code: Glyoxylate/hydroxypyruvate reductase B (324 aa).

Residues Arg-237 and Glu-266 contribute to the active site. The Proton donor role is filled by His-285.

The protein belongs to the D-isomer specific 2-hydroxyacid dehydrogenase family. GhrB subfamily. Homodimer.

The protein localises to the cytoplasm. It catalyses the reaction glycolate + NADP(+) = glyoxylate + NADPH + H(+). It carries out the reaction (R)-glycerate + NAD(+) = 3-hydroxypyruvate + NADH + H(+). The catalysed reaction is (R)-glycerate + NADP(+) = 3-hydroxypyruvate + NADPH + H(+). Functionally, catalyzes the NADPH-dependent reduction of glyoxylate and hydroxypyruvate into glycolate and glycerate, respectively. This chain is Glyoxylate/hydroxypyruvate reductase B, found in Salmonella agona (strain SL483).